We begin with the raw amino-acid sequence, 282 residues long: Elongation factor Ts (282 aa).

Residues 80 to 83 (TDFV) form an involved in Mg(2+) ion dislocation from EF-Tu region.

The protein belongs to the EF-Ts family.

Its subcellular location is the cytoplasm. In terms of biological role, associates with the EF-Tu.GDP complex and induces the exchange of GDP to GTP. It remains bound to the aminoacyl-tRNA.EF-Tu.GTP complex up to the GTP hydrolysis stage on the ribosome. This is Elongation factor Ts (tsf) from Chlamydia muridarum (strain MoPn / Nigg).